The primary structure comprises 192 residues: Fe/S biogenesis protein NfuA (192 aa).

Positions 149 and 152 each coordinate [4Fe-4S] cluster.

The protein belongs to the NfuA family. In terms of assembly, homodimer. Requires [4Fe-4S] cluster as cofactor.

In terms of biological role, involved in iron-sulfur cluster biogenesis. Binds a 4Fe-4S cluster, can transfer this cluster to apoproteins, and thereby intervenes in the maturation of Fe/S proteins. Could also act as a scaffold/chaperone for damaged Fe/S proteins. In Shewanella frigidimarina (strain NCIMB 400), this protein is Fe/S biogenesis protein NfuA.